A 276-amino-acid polypeptide reads, in one-letter code: 2,3,4,5-tetrahydropyridine-2,6-dicarboxylate N-succinyltransferase (276 aa).

Positions 104 and 141 each coordinate substrate.

The protein belongs to the transferase hexapeptide repeat family. Homotrimer.

Its subcellular location is the cytoplasm. It catalyses the reaction (S)-2,3,4,5-tetrahydrodipicolinate + succinyl-CoA + H2O = (S)-2-succinylamino-6-oxoheptanedioate + CoA. It functions in the pathway amino-acid biosynthesis; L-lysine biosynthesis via DAP pathway; LL-2,6-diaminopimelate from (S)-tetrahydrodipicolinate (succinylase route): step 1/3. In Legionella pneumophila (strain Corby), this protein is 2,3,4,5-tetrahydropyridine-2,6-dicarboxylate N-succinyltransferase.